Reading from the N-terminus, the 404-residue chain is Probable protein phosphatase 1N (404 aa).

The 261-residue stretch at 59–319 folds into the PPM-type phosphatase domain; sequence RFGASAVQGW…DNMTCMVVCF (261 aa). Mn(2+) is bound by residues Asp-96, Gly-97, Asp-267, and Asp-310.

Belongs to the PP2C family. Requires Mg(2+) as cofactor. The cofactor is Mn(2+).

It carries out the reaction O-phospho-L-seryl-[protein] + H2O = L-seryl-[protein] + phosphate. The enzyme catalyses O-phospho-L-threonyl-[protein] + H2O = L-threonyl-[protein] + phosphate. In Mus musculus (Mouse), this protein is Probable protein phosphatase 1N (Ppm1n).